The primary structure comprises 216 residues: Pyrophosphatase PpaX (216 aa).

D9 serves as the catalytic Nucleophile.

This sequence belongs to the HAD-like hydrolase superfamily. PpaX family. Requires Mg(2+) as cofactor.

It catalyses the reaction diphosphate + H2O = 2 phosphate + H(+). Functionally, hydrolyzes pyrophosphate formed during P-Ser-HPr dephosphorylation by HPrK/P. Might play a role in controlling the intracellular pyrophosphate pool. This chain is Pyrophosphatase PpaX, found in Bacillus cereus (strain B4264).